Here is a 1441-residue protein sequence, read N- to C-terminus: uncharacterized protein (1441 aa).

13 disordered regions span residues 1–95, 150–204, 224–289, 401–477, 529–661, 680–760, 776–810, 849–899, 980–1118, 1161–1185, 1209–1321, 1348–1402, and 1421–1441; these read MGFL…EVIS, NGGI…QQQF, KPHQ…GEGE, HSNG…QLHQ, RHES…QPQQ, LNKD…KSQT, RKSSDSLNSSNSNIPITNISPGRQSQQQQQQHIQQ, QQQF…TQQL, RGGS…DNNN, KSLKNSFNNNNNENINNNNNENENN, NIES…YRSY, GHNS…HIFF, and LKFNQQNNSNNNDDLGGSILE. The segment covering 19 to 38 has biased composition (low complexity); that stretch reads NDNSFDGGSSSYNNNNNNNN. The segment covering 39 to 56 has biased composition (polar residues); that stretch reads QPITYTPTAIRSPNNKTM. 6 stretches are compositionally biased toward low complexity: residues 57–91, 153–187, 227–283, 416–445, 555–564, and 572–635; these read SQSQTSIPTLSSSPSLNYPSSPPNNNNNNNNGNGN, ISQPTTPISSPSQPFQSVQPNLIIPTTPTTTTTTP, QQQQ…SLQN, NNNNNNNNNNNNNNGNNSNNGNINNNGINN, GNTDGVNIDN, and NNNN…TNNT. The segment covering 636–645 has biased composition (polar residues); sequence ATPSVINGDS. Composition is skewed to low complexity over residues 648-661 and 680-700; these read QEQPQQSQQQQPQQ and LNKDSNNVDNNNNNNNIDDNN. The segment covering 703–720 has biased composition (basic and acidic residues); the sequence is SREEMENILKKSQQDSNK. The span at 729–751 shows a compositional bias: polar residues; it reads EDSNSGSPTFQDFQSSAAASNVS. Low complexity-rich tracts occupy residues 780–810 and 849–880; these read DSLNSSNSNIPITNISPGRQSQQQQQQHIQQ and QQQFQFQQNSVSSQSLQSLNGGNNNNNSNSGS. The segment covering 881–892 has biased composition (gly residues); that stretch reads INGGSNSGGGGV. A compositionally biased stretch (polar residues) spans 981-994; that stretch reads GGSTNRTTPPFLTP. Residues 995 to 1067 are compositionally biased toward low complexity; sequence NTSQTNLSSL…NKQTANNTTN (73 aa). Residues 1068 to 1087 are compositionally biased toward polar residues; the sequence is DFSFDQNTDLRSSTNSLTIG. The span at 1088 to 1118 shows a compositional bias: low complexity; it reads SNSNFSSLKNSLNLENPENNNNPDKNVDNNN. Composition is skewed to low complexity over residues 1225–1249 and 1257–1291; these read DNNNSSSNNNNNNLKNSNSNNSLRN and NISNNNNNNNNNNNNNNNNNNNNNNNNNNNNNNNE. The segment covering 1362-1373 has biased composition (basic and acidic residues); that stretch reads RHKDSIGDKEMD.

This is an uncharacterized protein from Dictyostelium discoideum (Social amoeba).